Here is a 63-residue protein sequence, read N- to C-terminus: Small ribosomal subunit protein bS21 (63 aa).

It belongs to the bacterial ribosomal protein bS21 family.

In Parabacteroides distasonis (strain ATCC 8503 / DSM 20701 / CIP 104284 / JCM 5825 / NCTC 11152), this protein is Small ribosomal subunit protein bS21.